The chain runs to 438 residues: UDP-N-acetylmuramoylalanine--D-glutamate ligase (438 aa).

Residue 115-121 (GSNGKST) participates in ATP binding.

This sequence belongs to the MurCDEF family.

It localises to the cytoplasm. It carries out the reaction UDP-N-acetyl-alpha-D-muramoyl-L-alanine + D-glutamate + ATP = UDP-N-acetyl-alpha-D-muramoyl-L-alanyl-D-glutamate + ADP + phosphate + H(+). The protein operates within cell wall biogenesis; peptidoglycan biosynthesis. Cell wall formation. Catalyzes the addition of glutamate to the nucleotide precursor UDP-N-acetylmuramoyl-L-alanine (UMA). This chain is UDP-N-acetylmuramoylalanine--D-glutamate ligase, found in Vibrio atlanticus (strain LGP32) (Vibrio splendidus (strain Mel32)).